Reading from the N-terminus, the 232-residue chain is 2-C-methyl-D-erythritol 4-phosphate cytidylyltransferase (232 aa).

This sequence belongs to the IspD/TarI cytidylyltransferase family. IspD subfamily.

It carries out the reaction 2-C-methyl-D-erythritol 4-phosphate + CTP + H(+) = 4-CDP-2-C-methyl-D-erythritol + diphosphate. Its pathway is isoprenoid biosynthesis; isopentenyl diphosphate biosynthesis via DXP pathway; isopentenyl diphosphate from 1-deoxy-D-xylulose 5-phosphate: step 2/6. Its function is as follows. Catalyzes the formation of 4-diphosphocytidyl-2-C-methyl-D-erythritol from CTP and 2-C-methyl-D-erythritol 4-phosphate (MEP). The protein is 2-C-methyl-D-erythritol 4-phosphate cytidylyltransferase of Geobacter metallireducens (strain ATCC 53774 / DSM 7210 / GS-15).